A 326-amino-acid polypeptide reads, in one-letter code: Type II methyltransferase M.EcoRI (326 aa).

It belongs to the N(4)/N(6)-methyltransferase family. As to quaternary structure, monomer.

It carries out the reaction a 2'-deoxyadenosine in DNA + S-adenosyl-L-methionine = an N(6)-methyl-2'-deoxyadenosine in DNA + S-adenosyl-L-homocysteine + H(+). Its function is as follows. A methylase that recognizes the double-stranded sequence 5'-GAATTC-3', methylates A-3 on both strands, and protects the DNA from cleavage by the EcoRI endonuclease. The chain is Type II methyltransferase M.EcoRI (ecoRIM) from Escherichia coli.